Here is a 940-residue protein sequence, read N- to C-terminus: Leucine--tRNA ligase, mitochondrial (940 aa).

The short motif at 54-64 is the 'HIGH' region element; that stretch reads PYPSGALHMGH. A 'KMSKS' region motif is present at residues 638–642; it reads TINKL. Residue Lys641 coordinates ATP. The interval 724–744 is disordered; sequence KEQHQHQQQQHQQPLPSSEFN.

Belongs to the class-I aminoacyl-tRNA synthetase family.

Its subcellular location is the mitochondrion. It carries out the reaction tRNA(Leu) + L-leucine + ATP = L-leucyl-tRNA(Leu) + AMP + diphosphate. This chain is Leucine--tRNA ligase, mitochondrial (mleuS), found in Dictyostelium discoideum (Social amoeba).